A 396-amino-acid polypeptide reads, in one-letter code: Pre-mRNA-splicing regulator WTAP (396 aa).

M1 is modified (N-acetylmethionine). S14 carries the post-translational modification Phosphoserine. 3 stretches are compositionally biased toward low complexity: residues 240–257 (QQQQ…TTAS), 278–291 (SNGS…SGSG), and 304–316 (PSSP…SSNS). Residues 240 to 396 (QQQQSQASAP…SSVNVQGSVL (157 aa)) are disordered. 3 positions are modified to phosphoserine: S305, S306, and S341. Residues 340-356 (DSPTGSENSLTHQSNDT) show a composition bias toward polar residues. T350 carries the phosphothreonine modification. The segment covering 357–368 (DSSHDPQEEKAV) has biased composition (basic and acidic residues). Polar residues predominate over residues 380–396 (HVQNGLDSSVNVQGSVL). Position 388 is a phosphoserine (S388).

Belongs to the fl(2)d family. Component of the WMM complex, a N6-methyltransferase complex composed of a catalytic subcomplex, named MAC, and of an associated subcomplex, named MACOM. The MAC subcomplex is composed of METTL3 and METTL14. The MACOM subcomplex is composed of WTAP, ZC3H13, CBLL1/HAKAI, VIRMA, and, in some cases of RBM15 (RBM15 or RBM15B). Interacts with WT1. Also a component of a MACOM-like complex, named WTAP complex, composed of WTAP, ZC3H13, CBLL1, VIRMA, RBM15, BCLAF1 and THRAP3. In terms of tissue distribution, ubiquitously expressed.

The protein resides in the nucleus speckle. The protein localises to the nucleus. Its subcellular location is the nucleoplasm. It is found in the cytoplasm. Functionally, associated component of the WMM complex, a complex that mediates N6-methyladenosine (m6A) methylation of RNAs, a modification that plays a role in the efficiency of mRNA splicing and RNA processing. Required for accumulation of METTL3 and METTL14 to nuclear speckle. Acts as a mRNA splicing regulator. Regulates G2/M cell-cycle transition by binding to the 3' UTR of CCNA2, which enhances its stability. Impairs WT1 DNA-binding ability and inhibits expression of WT1 target genes. This is Pre-mRNA-splicing regulator WTAP from Homo sapiens (Human).